Consider the following 195-residue polypeptide: Large ribosomal subunit protein uL5 (195 aa).

This sequence belongs to the universal ribosomal protein uL5 family. Part of the 50S ribosomal subunit; part of the 5S rRNA/L5/L18/L25 subcomplex. Contacts the 5S rRNA and the P site tRNA. Forms a bridge to the 30S subunit in the 70S ribosome.

In terms of biological role, this is one of the proteins that bind and probably mediate the attachment of the 5S RNA into the large ribosomal subunit, where it forms part of the central protuberance. In the 70S ribosome it contacts protein S13 of the 30S subunit (bridge B1b), connecting the 2 subunits; this bridge is implicated in subunit movement. Contacts the P site tRNA; the 5S rRNA and some of its associated proteins might help stabilize positioning of ribosome-bound tRNAs. The polypeptide is Large ribosomal subunit protein uL5 (Chlorobium phaeobacteroides (strain DSM 266 / SMG 266 / 2430)).